We begin with the raw amino-acid sequence, 465 residues long: Mitochondrial-processing peptidase subunit beta (465 aa).

His79 provides a ligand contact to Zn(2+). Glu82 (proton acceptor) is an active-site residue. Zn(2+)-binding residues include His83 and Glu159.

The protein belongs to the peptidase M16 family. Heterodimer of an alpha subunit and a beta subunit subunits, forming the mitochondrial processing protease (MPP) in which the alpha subunit is involved in substrate recognition and binding and the beta subunit is the catalytic subunit. The cofactor is Zn(2+).

Its subcellular location is the mitochondrion matrix. It catalyses the reaction Release of N-terminal transit peptides from precursor proteins imported into the mitochondrion, typically with Arg in position P2.. Its activity is regulated as follows. Binding to the alpha subunit is required for catalytic activity. Its function is as follows. Catalytic subunit of the essential mitochondrial processing protease (MPP), which cleaves the mitochondrial sequence off newly imported precursors proteins. Preferentially, cleaves after an arginine at position P2. This Blastocladiella emersonii (Aquatic fungus) protein is Mitochondrial-processing peptidase subunit beta (MPP1).